Here is a 448-residue protein sequence, read N- to C-terminus: Receptor homology region, transmembrane domain- and RING domain-containing protein 2 (448 aa).

An N-terminal signal peptide occupies residues 1–20 (MNRALVLLLYVCTVSCLASS). At 21–163 (KVILMRNNIT…IPSFENSAWS (143 aa)) the chain is on the lumenal side. Asparagine 28 and asparagine 74 each carry an N-linked (GlcNAc...) asparagine glycan. Positions 60-144 (DACQNLMNKP…ETGEVLKEYA (85 aa)) constitute a PA domain. Cysteine 62 and cysteine 87 are disulfide-bonded. The chain crosses the membrane as a helical span at residues 164-184 (IMAVSFISLLAMSAVLATCFF). The Cytoplasmic portion of the chain corresponds to 185 to 448 (VRRHRIRRRT…YASANSLPDC (264 aa)). The RING-type; atypical zinc finger occupies 232–274 (CAICLEDYTVGDKLRLLPCCHKFHAACVDSWLTSWRTFCPVCK). Positions 344–378 (QSSSNRRSPPISVSRSSVDLRQQAASPSPSPSQRS) are enriched in low complexity. Disordered stretches follow at residues 344–380 (QSSS…RSYI) and 402–424 (MSPY…NYPL). The segment covering 408 to 423 (SPSNASPAMAGSSNYP) has biased composition (polar residues).

The protein resides in the protein storage vacuole membrane. It localises to the golgi apparatus membrane. Its function is as follows. Involved in the trafficking of vacuolar proteins. May function as a sorting receptor for protein trafficking to the protein storage vacuole (PSV). This is Receptor homology region, transmembrane domain- and RING domain-containing protein 2 (RMR2) from Arabidopsis thaliana (Mouse-ear cress).